A 528-amino-acid polypeptide reads, in one-letter code: MMWWFLLIGLASAAATASSASSASFESRCQHFHKEIHLQNVHVLSTTYVPIGSNIPMVYNPPICGGTASSSISTIQFCQVALNVTTSDKSQFFMEAWLPSNYTGRFLSTGNGGLNGCVSYADMVYATQYGFATIGTNNGHFGDTGQYFLNNPEVIEDFAYRALHTGTVVGKALTKLFYPQGYKNSYYLGCSTGGRQGWKSIQRFPDDFDGVVAGAPAINFVNLCSWGSRFLKITGPPGSETFVTSAQWSAVHNEILRQCDALDGAVDGIIEDTDLCQPVFETLLCNSTAVDKTSCLTGVQANTVNEVFSAMYGLDGKWLYPRMQPGSELAASFIYYSGNGFKYSDDWYKYVVYNDSNWDHSTWTLADAAAAAAQDPFQISSFDGNISGFQKAGGKVLHYHGLEDAIITSDSSKAYYKHVADTMGLSPSELDHFYRLFPISGMGHCSPGTGAASIGQGSSTYAGDDPQDNVLMAIVQWVEKGIAPEYVRGSKMSRDGTIDYRRKHCKYPKRNRYVGPGKYTDENAWKCV.

A signal peptide spans 1 to 19 (MMWWFLLIGLASAAATASS). 6 disulfide bridges follow: C29–C78, C64–C117, C190–C445, C259–C276, C285–C295, and C505–C527. N-linked (GlcNAc...) asparagine glycans are attached at residues N83 and N101. Catalysis depends on S191, which acts as the Acyl-ester intermediate. D260, D263, A265, D267, and I269 together coordinate Ca(2+). Residues N286, N354, and N385 are each glycosylated (N-linked (GlcNAc...) asparagine). Active-site charge relay system residues include D404 and H444.

It belongs to the tannase family.

It localises to the secreted. It catalyses the reaction feruloyl-polysaccharide + H2O = ferulate + polysaccharide.. Its function is as follows. Involved in degradation of plant cell walls. Hydrolyzes the feruloyl-arabinose ester bond in arabinoxylans as well as the feruloyl-galactose and feruloyl-arabinose ester bonds in pectin. The chain is Probable feruloyl esterase B-1 (faeB-1) from Aspergillus fumigatus (strain CBS 144.89 / FGSC A1163 / CEA10) (Neosartorya fumigata).